We begin with the raw amino-acid sequence, 409 residues long: Peptidase T (409 aa).

Residue His-80 participates in Zn(2+) binding. The active site involves Asp-82. Asp-143 is a Zn(2+) binding site. The active-site Proton acceptor is the Glu-177. The Zn(2+) site is built by Glu-178, Asp-200, and His-382.

This sequence belongs to the peptidase M20B family. Requires Zn(2+) as cofactor.

The protein localises to the cytoplasm. The catalysed reaction is Release of the N-terminal residue from a tripeptide.. Cleaves the N-terminal amino acid of tripeptides. The chain is Peptidase T from Alkaliphilus oremlandii (strain OhILAs) (Clostridium oremlandii (strain OhILAs)).